The primary structure comprises 86 residues: Small ribosomal subunit protein uS17 (86 aa).

It belongs to the universal ribosomal protein uS17 family. As to quaternary structure, part of the 30S ribosomal subunit.

One of the primary rRNA binding proteins, it binds specifically to the 5'-end of 16S ribosomal RNA. In Dehalococcoides mccartyi (strain ATCC BAA-2266 / KCTC 15142 / 195) (Dehalococcoides ethenogenes (strain 195)), this protein is Small ribosomal subunit protein uS17.